The chain runs to 302 residues: Haloalkane dehalogenase (302 aa).

The AB hydrolase-1 domain maps to 48 to 152 (PILLMHGEPS…VVVSNTGLPI (105 aa)). The active-site Nucleophile is the D123. The Proton donor role is filled by D249. Residue H278 is the Proton acceptor of the active site.

Belongs to the haloalkane dehalogenase family. Type 1 subfamily. As to quaternary structure, monomer.

The catalysed reaction is 1-haloalkane + H2O = a halide anion + a primary alcohol + H(+). Functionally, catalyzes hydrolytic cleavage of carbon-halogen bonds in halogenated aliphatic compounds, leading to the formation of the corresponding primary alcohols, halide ions and protons. This is Haloalkane dehalogenase from Caulobacter vibrioides (strain ATCC 19089 / CIP 103742 / CB 15) (Caulobacter crescentus).